We begin with the raw amino-acid sequence, 1560 residues long: BRD4-interacting chromatin-remodeling complex-associated protein (1560 aa).

6 disordered regions span residues 53–99 (VQEA…GADQ), 624–688 (APQA…ATPT), 723–949 (IVSA…VTTP), 974–1028 (NKAG…TGLP), 1049–1075 (KAAS…KPPT), and 1215–1300 (SSEG…IKTY). The span at 86-96 (ATGGGGGGSGG) shows a compositional bias: gly residues. Residues 624–664 (APQAPPAVSTPLPLGLQQPQAQQPPQAPTPQAAAPPQATTP) are compositionally biased toward low complexity. Pro residues predominate over residues 726–736 (APPPAQDPAPA). A compositionally biased stretch (low complexity) spans 747–780 (PQAPDSQASPAPAPQIPAAAPLKGPGPSSSPSLP). 3 stretches are compositionally biased toward pro residues: residues 791–806 (LPSP…PPSR), 814–831 (PSEP…PPTL), and 843–880 (VPPP…PHLP). Positions 881-896 (PSSTSSAVASSSETSS) are enriched in low complexity. Residue serine 919 is modified to Phosphoserine. Position 921 is a phosphothreonine (threonine 921). The segment covering 932 to 941 (PAAPPPPPPR) has biased composition (pro residues). Positions 1005–1028 (APSGTPTAPSHAPAPAPMAATGLP) are enriched in low complexity. Lysine 1057 carries the post-translational modification N6-acetyllysine. The span at 1227-1236 (LSSSAPGAST) shows a compositional bias: polar residues. Residues 1264-1281 (ASSSLSSSSSSSSAASSL) show a composition bias toward low complexity. A Glycyl lysine isopeptide (Lys-Gly) (interchain with G-Cter in SUMO2) cross-link involves residue lysine 1313. Disordered regions lie at residues 1324-1424 (NTAL…VDEA) and 1440-1560 (YQRM…TLTR). Pro residues predominate over residues 1331–1356 (HQPPPPPATLKVAEPPPRPPPPPPPT). Residues 1401-1412 (PEGTPAGRARGG) show a composition bias toward low complexity. At serine 1413 the chain carries Phosphoserine. Polar residues predominate over residues 1485-1515 (ASFSSDSPQDDTLTEHLQSAIDSILNLQQAP).

Component of the multiprotein chromatin-remodeling complexes SWI/SNF: SWI/SNF-A (BAF), SWI/SNF-B (PBAF) and related complexes. The canonical complex contains a catalytic subunit (either SMARCA4/BRG1/BAF190A or SMARCA2/BRM/BAF190B) and at least SMARCE1, ACTL6A/BAF53, SMARCC1/BAF155, SMARCC2/BAF170, and SMARCB1/SNF5/BAF47. Other subunits specific to each of the complexes may also be present permitting several possible combinations developmentally and tissue specific. Component of the SWI/SNF (GBAF) subcomplex, which includes at least BICRA or BICRAL (mutually exclusive), BRD9, SS18, the core BAF subunits, SMARCA2/BRM, SMARCA4/BRG1/BAF190A, ACTL6A/BAF53, SMARCC1/BAF155, and SMARCD1/BAF60A. Interacts with BRD4; the interaction bridges BRD4 to the GBAF complex. In terms of tissue distribution, expressed at moderate levels in heart, brain, placenta, skeletal muscle, and pancreas, and at lower levels in lung, liver and kidney.

The protein resides in the nucleus. Its function is as follows. Component of SWI/SNF chromatin remodeling subcomplex GBAF that carries out key enzymatic activities, changing chromatin structure by altering DNA-histone contacts within a nucleosome in an ATP-dependent manner. May play a role in BRD4-mediated gene transcription. This is BRD4-interacting chromatin-remodeling complex-associated protein from Homo sapiens (Human).